Consider the following 134-residue polypeptide: uncharacterized protein (134 aa).

A helical transmembrane segment spans residues 4–24 (NLLILLSLLLVVVAIMWWLYE).

It localises to the membrane. This is an uncharacterized protein from Invertebrate iridescent virus 6 (IIV-6).